Here is a 66-residue protein sequence, read N- to C-terminus: Large ribosomal subunit protein eL29 (66 aa).

The segment covering 1-14 has biased composition (polar residues); the sequence is MAKSKNSTNKNQIS. The disordered stretch occupies residues 1-66; the sequence is MAKSKNSTNK…KNLEKKVNKE (66 aa). Over residues 15–31 the composition is skewed to basic residues; that stretch reads KSHRNGIKKPKDHRHIS. Residues 47–66 are compositionally biased toward basic and acidic residues; that stretch reads IKNDPSIKKSKNLEKKVNKE.

The protein belongs to the eukaryotic ribosomal protein eL29 family.

It is found in the cytoplasm. The sequence is that of Large ribosomal subunit protein eL29 (RPL29) from Tetrahymena thermophila.